We begin with the raw amino-acid sequence, 116 residues long: Ribonuclease P protein component (116 aa).

It belongs to the RnpA family. In terms of assembly, consists of a catalytic RNA component (M1 or rnpB) and a protein subunit.

The enzyme catalyses Endonucleolytic cleavage of RNA, removing 5'-extranucleotides from tRNA precursor.. Functionally, RNaseP catalyzes the removal of the 5'-leader sequence from pre-tRNA to produce the mature 5'-terminus. It can also cleave other RNA substrates such as 4.5S RNA. The protein component plays an auxiliary but essential role in vivo by binding to the 5'-leader sequence and broadening the substrate specificity of the ribozyme. In Acholeplasma laidlawii (strain PG-8A), this protein is Ribonuclease P protein component.